The following is an 870-amino-acid chain: Outer membrane usher protein FimD (870 aa).

Positions 1–27 (MKKTTWFAGRFPGYVSPLSSVALSVLA) are cleaved as a signal peptide. Cysteines 843 and 865 form a disulfide.

The protein belongs to the fimbrial export usher family.

The protein localises to the cell outer membrane. Its function is as follows. Involved in the export and assembly of FimA fimbrial subunits across the outer membrane. The polypeptide is Outer membrane usher protein FimD (fimD) (Salmonella typhimurium (strain LT2 / SGSC1412 / ATCC 700720)).